Here is a 433-residue protein sequence, read N- to C-terminus: Xylose isomerase (433 aa).

Active-site residues include H97 and D100. Positions 228, 264, 267, 292, 303, 305, and 334 each coordinate Mg(2+).

This sequence belongs to the xylose isomerase family. In terms of assembly, homotetramer. The cofactor is Mg(2+).

It localises to the cytoplasm. It catalyses the reaction alpha-D-xylose = alpha-D-xylulofuranose. The chain is Xylose isomerase from Fervidobacterium gondwanense.